A 287-amino-acid chain; its full sequence is Formamidopyrimidine-DNA glycosylase (287 aa).

Pro2 (schiff-base intermediate with DNA) is an active-site residue. The Proton donor role is filled by Glu3. The active-site Proton donor; for beta-elimination activity is Lys58. Residues His104, Arg123, and Arg166 each coordinate DNA. An FPG-type zinc finger spans residues 251-287 (RVYDREGEPCPTPACKGVIAREVQAGRSTFFCPVCQV). Arg277 serves as the catalytic Proton donor; for delta-elimination activity.

Belongs to the FPG family. In terms of assembly, monomer. Requires Zn(2+) as cofactor.

The enzyme catalyses Hydrolysis of DNA containing ring-opened 7-methylguanine residues, releasing 2,6-diamino-4-hydroxy-5-(N-methyl)formamidopyrimidine.. It carries out the reaction 2'-deoxyribonucleotide-(2'-deoxyribose 5'-phosphate)-2'-deoxyribonucleotide-DNA = a 3'-end 2'-deoxyribonucleotide-(2,3-dehydro-2,3-deoxyribose 5'-phosphate)-DNA + a 5'-end 5'-phospho-2'-deoxyribonucleoside-DNA + H(+). Functionally, involved in base excision repair of DNA damaged by oxidation or by mutagenic agents. Acts as a DNA glycosylase that recognizes and removes damaged bases. Has a preference for oxidized purines, such as 7,8-dihydro-8-oxoguanine (8-oxoG). Has AP (apurinic/apyrimidinic) lyase activity and introduces nicks in the DNA strand. Cleaves the DNA backbone by beta-delta elimination to generate a single-strand break at the site of the removed base with both 3'- and 5'-phosphates. The chain is Formamidopyrimidine-DNA glycosylase from Caulobacter vibrioides (strain ATCC 19089 / CIP 103742 / CB 15) (Caulobacter crescentus).